We begin with the raw amino-acid sequence, 209 residues long: Large ribosomal subunit protein uL3 (209 aa).

The disordered stretch occupies residues 128-152 (QARGPMSHGSRYHRRPGSMGPVDPN).

This sequence belongs to the universal ribosomal protein uL3 family. As to quaternary structure, part of the 50S ribosomal subunit. Forms a cluster with proteins L14 and L19.

In terms of biological role, one of the primary rRNA binding proteins, it binds directly near the 3'-end of the 23S rRNA, where it nucleates assembly of the 50S subunit. The chain is Large ribosomal subunit protein uL3 from Halalkalibacterium halodurans (strain ATCC BAA-125 / DSM 18197 / FERM 7344 / JCM 9153 / C-125) (Bacillus halodurans).